Reading from the N-terminus, the 342-residue chain is [Citrate [pro-3S]-lyase] ligase (342 aa).

The N-acetyltransferase domain maps to 1 to 127 (MTLILKRVQL…RAVLMENSRE (127 aa)).

The catalysed reaction is holo-[citrate lyase ACP] + acetate + ATP = acetyl-[citrate lyase ACP] + AMP + diphosphate. In terms of biological role, acetylation of prosthetic group (2-(5''-phosphoribosyl)-3'-dephosphocoenzyme-A) of the gamma subunit of citrate lyase. This is [Citrate [pro-3S]-lyase] ligase (citC) from Klebsiella pneumoniae.